Reading from the N-terminus, the 1253-residue chain is Myosin-1 (1253 aa).

Residues 1 to 40 form a disordered region; the sequence is MGHSRRPVGGEKKSRGFGRSKAAADVGDGRQAGKPQVKKA. The 680-residue stretch at 50–729 folds into the Myosin motor domain; that stretch reads IGVSDLTLLS…TLFALEAMRD (680 aa). ATP is bound at residue 143–150; that stretch reads GESGAGKT. Residue S371 is modified to Phosphoserine. Residues 418 to 500 are actin-binding; the sequence is SIGILDIYGF…PGVFAALNDA (83 aa). IQ domains are found at residues 733 to 753 and 754 to 779; these read HNMA…RIEC and ATRI…QGHQ. The region spanning 787-977 is the TH1 domain; the sequence is RRRMSLLGSR…TIHTGAGEPA (191 aa). Disordered stretches follow at residues 959 to 1083 and 1139 to 1253; these read TGDD…PKKP and QVAP…DDDW. Positions 1029 to 1055 are enriched in low complexity; sequence PQPAAAQPAAPQPAARVVPQPVAAVAA. Pro residues-rich tracts occupy residues 1068–1081 and 1143–1155; these read APPP…PAPK and APKP…PPAA. The 62-residue stretch at 1080-1141 folds into the SH3 domain; it reads PKKPTAKALY…PEAYLEEQVA (62 aa). Low complexity-rich tracts occupy residues 1156–1173 and 1221–1235; these read PRST…AKAK and NSAS…LAEA.

It belongs to the TRAFAC class myosin-kinesin ATPase superfamily. Myosin family. Post-translationally, phosphorylation of the TEDS site (Ser-371) is required for the polarization of the actin cytoskeleton. Phosphorylation probably activates the myosin-I ATPase activity.

It is found in the cytoplasm. The protein resides in the cytoskeleton. Its subcellular location is the actin patch. Type-I myosin implicated in the organization of the actin cytoskeleton. Required for proper actin cytoskeleton polarization. At the cell cortex, assembles in patch-like structures together with proteins from the actin-polymerizing machinery and promotes actin assembly. Functions as actin nucleation-promoting factor (NPF) for the Arp2/3 complex. Plays an important role in polarized growth, spore germination, hyphal morphogenesis, and septal wall formation. In Aspergillus clavatus (strain ATCC 1007 / CBS 513.65 / DSM 816 / NCTC 3887 / NRRL 1 / QM 1276 / 107), this protein is Myosin-1 (myoA).